The primary structure comprises 551 residues: MPLRPGDASSSASTASNRSRTRTRYRTKAMNSEVDESLFGGVKPSSQGKSDSPIVVIHDKHAIRKTLSALGLEHKTETIQLITRDMVRELIVPTEDPSGESLIISPEEFERIKWASQVLTKEELNAREQALKKEKEGILEAVTIRKKIMKQKEMTWNNNKKLSDLEEVARERAQNLLQRADKLRMEQEEELKDMSKIILNAKCHAIRDAQILEKQQIQKELDEEERRLDHMMEIDRRESLQRQEDRERKRREERVRGKRHIVEQIKKNEEERSLQAEHREQEKEQMLAYLDRLQEEDLQDLERRHQEKLKMQAEIKRINDENQRQKAEMLAQERLADQMVMEFTKKKMAREAEYEAEQEKIRREKEKEIARLRALQEKAQDYQAEQDALRAKRNQEVADREWRRKEKENAQKKIETEEKLRKSRLEQVAFKEHTLAVQVQRDRDEFERILRAQREQIEREKQEQEKKAKGCLQHANELRRQVRENQQKHVQNRLATFEEGRRLKEEAEKRRERIEDIKKQKLEELRATGLPEKYCIEVERKANILPATSVN.

3 disordered regions span residues 1–52, 232–256, and 385–415; these read MPLR…KSDS, MEID…ERVR, and EQDA…KKIE. A compositionally biased stretch (low complexity) spans 8–18; the sequence is ASSSASTASNR. Residues 276-524 adopt a coiled-coil conformation; it reads AEHREQEKEQ…EDIKKQKLEE (249 aa). The segment covering 387–415 has biased composition (basic and acidic residues); sequence DALRAKRNQEVADREWRRKEKENAQKKIE.

The protein belongs to the CFAP45 family. Microtubule inner protein component of sperm flagellar doublet microtubules. Interacts with AK8; dimerization with AK8 may create a cavity at the interface of the dimer that can accommodate AMP. Interacts with CFAP52. Interacts with ENKUR. Directly interacts with DNALI1. Interacts with DNAH11. Interacts with DNAI1. In terms of tissue distribution, expressed in respiratory cells and in sperm (at protein level).

It is found in the cytoplasm. The protein resides in the cytoskeleton. Its subcellular location is the cilium axoneme. The protein localises to the flagellum axoneme. It localises to the cell projection. It is found in the cilium. The protein resides in the flagellum. Functionally, microtubule inner protein (MIP) part of the dynein-decorated doublet microtubules (DMTs) in cilia axoneme, which is required for motile cilia beating. It is an AMP-binding protein that may facilitate dynein ATPase-dependent ciliary and flagellar beating via adenine nucleotide homeostasis. May function as a donor of AMP to AK8 and hence promote ADP production. The chain is Cilia- and flagella-associated protein 45 (Cfap45) from Mus musculus (Mouse).